The primary structure comprises 728 residues: Hepatocyte growth factor (728 aa).

Positions M1–G32 are cleaved as a signal peptide. A Pyrrolidone carboxylic acid modification is found at Q33. The region spanning N38–D124 is the PAN domain. 8 disulfide bridges follow: C71–C97, C75–C85, C129–C207, C150–C190, C178–C202, C212–C289, C233–C272, and C261–C284. 2 Kringle domains span residues C129–C207 and C212–C289. N295 is a glycosylation site (N-linked (GlcNAc...) asparagine). Disulfide bonds link C306–C384, C327–C366, C355–C378, C392–C470, C413–C453, C441–C465, C488–C607, C520–C536, C615–C682, C645–C661, and C672–C700. Kringle domains follow at residues C306–C384 and C392–C470. An N-linked (GlcNAc...) asparagine glycan is attached at N403. Residues V496–L724 form the Peptidase S1 domain. N569 and N656 each carry an N-linked (GlcNAc...) asparagine glycan.

It belongs to the peptidase S1 family. Plasminogen subfamily. Dimer of an alpha chain and a beta chain linked by a disulfide bond. Interacts with SRPX2; the interaction increases HGF mitogenic activity. The single-chain precursor undergoes proteolytic processing by TMPRSS13 resulting in an active two-chain form. The single-chain precursor undergoes proteolytic processing by HGFAC resulting in an active two-chain form.

Its function is as follows. Potent mitogen for mature parenchymal hepatocyte cells, seems to be a hepatotrophic factor, and acts as a growth factor for a broad spectrum of tissues and cell types. Activating ligand for the receptor tyrosine kinase MET by binding to it and promoting its dimerization. Activates MAPK signaling following TMPRSS13 cleavage and activation. The polypeptide is Hepatocyte growth factor (Hgf) (Rattus norvegicus (Rat)).